We begin with the raw amino-acid sequence, 219 residues long: Transmembrane emp24 domain-containing protein 10 (219 aa).

An N-terminal signal peptide occupies residues 1 to 31 (MSGSSGPLSWPGPRPCALLFLLLLGPSSVLA). The segment at 1–142 (MSGSSGPLSW…KNYEEIAKVE (142 aa)) is required for interaction with STX17. Residues 32–185 (ISFHLPVNSR…RDTNESTNTR (154 aa)) are Lumenal-facing. In terms of domain architecture, GOLD spans 41–193 (RKCLREEIHK…TRVLYFSIFS (153 aa)). Positions 147–178 (LEVELRRLEDLSESIVNDFAYMKKREEEMRDT) are required for TMED10 and TMED2 cis-Golgi network localization. Arg171 and Arg176 each carry dimethylated arginine. N-linked (GlcNAc...) asparagine glycosylation is present at Asn179. The chain crosses the membrane as a helical span at residues 186-206 (VLYFSIFSMLCLIGLATWQVF). The tract at residues 204–219 (QVFYLRRFFKAKKLIE) is interaction with COPG1. The Cytoplasmic segment spans residues 207-219 (YLRRFFKAKKLIE). Residues 207-219 (YLRRFFKAKKLIE) are interaction with ARF1 and IL1B. A COPII vesicle coat-binding motif is present at residues 211–212 (FF). The short motif at 211-219 (FFKAKKLIE) is the COPI vesicle coat-binding element.

This sequence belongs to the EMP24/GP25L family. In terms of assembly, predominantly dimeric and to a lesser extent monomeric in the ER. Monomer and dimer in ERGIC and cis-Golgi network. Forms homooligomer (via GOLD domain); the assembly is promoted by direct binding with leaderless cargos and may form a protein channel that facilitates cargo entry into the ERGIC. Forms heterooligomeric complexes with other members of the p24 family such as TMED2, TMED7 and TMED9. Interacts (via GOLD domain) with TMED2 (via GOLD domain); the complex is required for export of TMED10 from the ER to the cis-Golgi network; the complex is proposed to be involved in cis-Golgi network dynamics and / or biogenesis. Associates with the COPI vesicle coat subunits (coatomer). Tetramerization of the cytoplasmic domain at the Golgi membrane in vitro; the complex is proposed to interact with COPI coatomer and induce budding of the vesicles. Interacts with COPG1; the interaction involves TMED10 homodimer. Interacts with ARF1 (GDP-bound); the interaction probably involves a TMED10 oligomer. Interacts with SEC23A, SEC24B, SEC24C and SEC24D components of the coat protein complex II/COPII, indicative of an association of TMED10 with the COPII vesicle coat. Interacts with CD59. Interacts with MPPE1/PGAP5; the complex might recruit and sort GPI-anchored proteins to the ER-exit site, or the interaction might lead to recycling of PGAP5 between the ER and the Golgi. Interacts with F2LR1/PAR2. Interacts with KDELR2/ERD2; the interaction is disrupted by KDELR2 ligand. Found in a complex composed at least of SURF4, TMED2 and TMED10. Associates with the presenilin-dependent gamma-secretase complex. Interacts with STX17; the interaction is direct. Interacts with IL-1; the interaction is direct. Interacts with RAB21 (active GTP-bound form); the interaction is indirect and regulates TMED10 abundance and localization at the Golgi.

The protein resides in the endoplasmic reticulum membrane. It is found in the endoplasmic reticulum-Golgi intermediate compartment membrane. The protein localises to the golgi apparatus membrane. It localises to the golgi apparatus. Its subcellular location is the cis-Golgi network membrane. The protein resides in the trans-Golgi network membrane. It is found in the cytoplasmic vesicle. The protein localises to the secretory vesicle membrane. It localises to the cell membrane. Its subcellular location is the melanosome. In terms of biological role, cargo receptor involved in protein vesicular trafficking and quality control in the endoplasmic reticulum (ER) and Golgi. The p24 protein family is a group of transmembrane proteins that bind coat protein complex I/COPI and coat protein complex II/COPII involved in vesicular trafficking between the membranes. Acts at the lumenal side for incorporation of secretory cargo molecules into transport vesicles and involved in vesicle coat formation at the cytoplasmic side. Mainly functions in the early secretory pathway and cycles between the ER, ER-Golgi intermediate compartment (ERGIC) and Golgi, mediating cargo transport through COPI and COPII-coated vesicles. In COPII vesicle-mediated anterograde transport, involved in the transport of GPI-anchored proteins by acting together with TMED2 as their cargo receptor; the function specifically implies SEC24C and SEC24D of the COPII vesicle coat and lipid raft-like microdomains of the ER. Recognizes GPI anchors structural remodeled in the ER by the GPI inositol-deacylase/PGAP1 and the metallophosphoesterase MPPE1/PGAP5. In COPI vesicle-mediated retrograde transport, involved in the biogenesis of COPI vesicles and vesicle coat recruitment. Involved in trafficking of amyloid beta A4 protein and soluble APP-beta release (independent from the modulation of gamma-secretase activity). Involved in the KDELR2-mediated retrograde transport of the toxin A subunit (CTX-A-K63)together with COPI and the COOH terminus of KDELR2. On Golgi membranes, acts as a primary receptor for ARF1-GDP, a GTP-binding protein involved in COPI-vesicle formation. Increases coatomer-dependent GTPase-activating activity of ARFGAP2 which mediates the hydrolysis of ARF1-bound GTP and therefore modulates protein trafficking from the Golgi apparatus. Involved in the exocytic trafficking of G protein-coupled receptors F2LR1/PAR2 (trypsin and tryspin-like enzyme receptor), OPRM1 (opioid receptor) and P2RY4 (UTD and UDP receptor) from the Golgi to the plasma membrane, thus contributing to receptor resensitization. In addition to its cargo receptor activity, may also act as a protein channel after oligomerization, facilitating the post-translational entry of leaderless cytoplasmic cargo into the ERGIC. Involved in the translocation into ERGIC, the vesicle entry and the secretion of leaderless cargos (lacking the secretion signal sequence), including the mature form of interleukin 1/IL-1 family members, the alpha-crystallin B chain HSPB5, the carbohydrate-binding proteins galectin-1/LGALS1 and galectin-3/LGALS3, the microtubule-associated protein Tau/MAPT, and the annexin A1/ANXA1; the translocation process is dependent on cargo protein unfolding and enhanced by chaperones HSP90AB1 and HSP90B1/GRP9. Could also associates with the presenilin-dependent gamma-secretase complex in order to regulate gamma-cleavages of the amyloid beta A4 protein to yield amyloid-beta 40/Abeta40. This Mesocricetus auratus (Golden hamster) protein is Transmembrane emp24 domain-containing protein 10 (TMED10).